The primary structure comprises 679 residues: Methionine--tRNA ligase (679 aa).

The 'HIGH' region signature appears at 12-22 (PYANGPIHIGH). 4 residues coordinate Zn(2+): C143, C146, C156, and C158. The 'KMSKS' region signature appears at 328–332 (KMSKS). Position 331 (K331) interacts with ATP. Residues 537 to 564 (MMEESKDEAAQETGAAATNPFNDSDQPL) are disordered. Residues 577 to 679 (DFMKVDLRVA…EGALPGQRVH (103 aa)) enclose the tRNA-binding domain.

The protein belongs to the class-I aminoacyl-tRNA synthetase family. MetG type 1 subfamily. Homodimer. The cofactor is Zn(2+).

The protein localises to the cytoplasm. The enzyme catalyses tRNA(Met) + L-methionine + ATP = L-methionyl-tRNA(Met) + AMP + diphosphate. Its function is as follows. Is required not only for elongation of protein synthesis but also for the initiation of all mRNA translation through initiator tRNA(fMet) aminoacylation. The chain is Methionine--tRNA ligase from Rhodopirellula baltica (strain DSM 10527 / NCIMB 13988 / SH1).